Reading from the N-terminus, the 91-residue chain is Acyl-CoA-binding domain-containing protein 2 (91 aa).

The 86-residue stretch at 3–88 folds into the ACB domain; that stretch reads LQEEFEEFAE…VKQLLEEASA (86 aa). An acyl-CoA contacts are provided by residues Lys-15, 30–34, Lys-52, Lys-56, and Tyr-75; that span reads YGLYK.

It belongs to the ACBP family. Highly expressed in leaves. Expressed at low levels in roots and seeds.

Its subcellular location is the cytoplasm. It localises to the cytosol. Its function is as follows. Binds medium- and long-chain acyl-CoA esters with high affinity. Can interact in vitro with linolenoyl-CoA. Binds palmitoyl-CoA and linoleoyl-CoA in vitro. Binds phosphatidic acid (PA) and phosphatidylcholine (PC) in vitro. May play a role in the biosynthesis of phospholipids. This chain is Acyl-CoA-binding domain-containing protein 2, found in Oryza sativa subsp. japonica (Rice).